We begin with the raw amino-acid sequence, 185 residues long: Tetrahydromethanopterin S-methyltransferase subunit A 2 (185 aa).

Residues 1–21 (MVDKKVDKKPVPEDWPHIVGD) are Cytoplasmic-facing. A helical transmembrane segment spans residues 22–38 (YVVGDAESPVAVVTLGS). Residues 39 to 185 (HMEDEPVRAG…LNKNKPDENT (147 aa)) are Extracellular-facing. Position 88 (H88) interacts with 5-hydroxybenzimidazolylcob(I)amide.

The protein belongs to the MtrA family. The complex is composed of 8 subunits; MtrA, MtrB, MtrC, MtrD, MtrE, MtrF, MtrG and MtrH. 5-hydroxybenzimidazolylcob(I)amide serves as cofactor.

The protein localises to the cell membrane. The catalysed reaction is 5-methyl-5,6,7,8-tetrahydromethanopterin + coenzyme M + 2 Na(+)(in) = 5,6,7,8-tetrahydromethanopterin + methyl-coenzyme M + 2 Na(+)(out). The protein operates within one-carbon metabolism; methanogenesis from CO(2); methyl-coenzyme M from 5,10-methylene-5,6,7,8-tetrahydromethanopterin: step 2/2. Its function is as follows. Part of a complex that catalyzes the formation of methyl-coenzyme M and tetrahydromethanopterin from coenzyme M and methyl-tetrahydromethanopterin. This is an energy-conserving, sodium-ion translocating step. The protein is Tetrahydromethanopterin S-methyltransferase subunit A 2 of Methanothermobacter marburgensis (strain ATCC BAA-927 / DSM 2133 / JCM 14651 / NBRC 100331 / OCM 82 / Marburg) (Methanobacterium thermoautotrophicum).